The sequence spans 555 residues: MYSDKKNILQLVALLRAHGVTKVVLCPGSRNAPIVHTLAGHPDFTCYSVTDERSAGFFAIGLALQGGTPAAVCCTSGTALLNLHPAIAEAYYQKVSLVVISADRPAAWINQMDGQTLPQPGVFRSLVKKSVDLPEIHTDEDEWYCNRLLNEALLELNHHGKGPVHINVPVSEPLFQFTAESLPEVRVITRYQGLNVYDRDYDGLIDRLNKYNRRMMIVGQMNLIYLFEKKYSKMLYKQFAWFTEHLGNQTVPGIPIRNFDAALYAMSPEMQEKMIPELVITYGGHIVSKRMKKYLRQHPPKEHWHVSPDGEVIDLFQGALTTIIEMDPFEFMEKIAFLLDNRTPEYPRQWENFCKELPRPELPYSEMSAIGSLIQALPASCALHLANSSAVRYAQLYSLPDTVEVCCNRGTSGIEGSLSTAIGYAAASKKLNFVVIGDLSFFYDMNALWNNHFGSNLRILLLNNGGGEIFHTLPGLEMSGTSHRFVTAVHKTSAKGWAEERGFLYQEVQDEKQLDEAMKTFTQPELLTQPVIMEVFTNKNKDARILKDYYHQLKN.

The protein belongs to the TPP enzyme family. MenD subfamily. In terms of assembly, homodimer. The cofactor is Mg(2+). Mn(2+) is required as a cofactor. It depends on thiamine diphosphate as a cofactor.

The enzyme catalyses isochorismate + 2-oxoglutarate + H(+) = 5-enolpyruvoyl-6-hydroxy-2-succinyl-cyclohex-3-ene-1-carboxylate + CO2. It functions in the pathway quinol/quinone metabolism; 1,4-dihydroxy-2-naphthoate biosynthesis; 1,4-dihydroxy-2-naphthoate from chorismate: step 2/7. Its pathway is quinol/quinone metabolism; menaquinone biosynthesis. In terms of biological role, catalyzes the thiamine diphosphate-dependent decarboxylation of 2-oxoglutarate and the subsequent addition of the resulting succinic semialdehyde-thiamine pyrophosphate anion to isochorismate to yield 2-succinyl-5-enolpyruvyl-6-hydroxy-3-cyclohexene-1-carboxylate (SEPHCHC). The polypeptide is 2-succinyl-5-enolpyruvyl-6-hydroxy-3-cyclohexene-1-carboxylate synthase (Bacteroides fragilis (strain ATCC 25285 / DSM 2151 / CCUG 4856 / JCM 11019 / LMG 10263 / NCTC 9343 / Onslow / VPI 2553 / EN-2)).